The chain runs to 145 residues: Functional amyloid chaperone FapA (145 aa).

Residues M1 to A27 form the signal peptide.

It belongs to the FapA family. As to quaternary structure, monomer in solution. Interacts with FapC but not FapB in vitro.

It is found in the periplasm. In terms of biological role, an intrinsically disordered chaperone for fibril amyloid FapC that guards against fibrillation, pro within the periplasm. Upon overexpression of the endogenous six-gene locus (fapA-fapF), cells form large clumps during liquid growth, make large amounts of biofilm and produce relatively unstable amyloid fibrils. The chain is Functional amyloid chaperone FapA from Pseudomonas putida (strain ATCC 700007 / DSM 6899 / JCM 31910 / BCRC 17059 / LMG 24140 / F1).